We begin with the raw amino-acid sequence, 173 residues long: 6,7-dimethyl-8-ribityllumazine synthase (173 aa).

5-amino-6-(D-ribitylamino)uracil is bound by residues Phe24, 58–60 (ALE), and 82–84 (AVI). 87–88 (ET) serves as a coordination point for (2S)-2-hydroxy-3-oxobutyl phosphate. The active-site Proton donor is His90. Asn115 contributes to the 5-amino-6-(D-ribitylamino)uracil binding site. Arg129 is a (2S)-2-hydroxy-3-oxobutyl phosphate binding site. A disordered region spans residues 150–173 (ALEPEEDDEDDEDEDFDDEEDDGR). The segment covering 152-173 (EPEEDDEDDEDEDFDDEEDDGR) has biased composition (acidic residues).

It belongs to the DMRL synthase family.

It carries out the reaction (2S)-2-hydroxy-3-oxobutyl phosphate + 5-amino-6-(D-ribitylamino)uracil = 6,7-dimethyl-8-(1-D-ribityl)lumazine + phosphate + 2 H2O + H(+). It functions in the pathway cofactor biosynthesis; riboflavin biosynthesis; riboflavin from 2-hydroxy-3-oxobutyl phosphate and 5-amino-6-(D-ribitylamino)uracil: step 1/2. Catalyzes the formation of 6,7-dimethyl-8-ribityllumazine by condensation of 5-amino-6-(D-ribitylamino)uracil with 3,4-dihydroxy-2-butanone 4-phosphate. This is the penultimate step in the biosynthesis of riboflavin. The protein is 6,7-dimethyl-8-ribityllumazine synthase of Bordetella pertussis (strain Tohama I / ATCC BAA-589 / NCTC 13251).